We begin with the raw amino-acid sequence, 58 residues long: Small ribosomal subunit protein bS21 (58 aa).

Residues 35–58 (REHYEKPSVKRKKKSEAARKRKFK) form a disordered region. Over residues 43-58 (VKRKKKSEAARKRKFK) the composition is skewed to basic residues.

The protein belongs to the bacterial ribosomal protein bS21 family.

This is Small ribosomal subunit protein bS21 from Ruminiclostridium cellulolyticum (strain ATCC 35319 / DSM 5812 / JCM 6584 / H10) (Clostridium cellulolyticum).